Here is a 267-residue protein sequence, read N- to C-terminus: DNA repair protein RecO (267 aa).

The protein belongs to the RecO family.

Its function is as follows. Involved in DNA repair and RecF pathway recombination. This chain is DNA repair protein RecO, found in Moorella thermoacetica (strain ATCC 39073 / JCM 9320).